We begin with the raw amino-acid sequence, 411 residues long: Methylthioribose-1-phosphate isomerase (411 aa).

Position 2 is an N-acetylserine (Ser2). Catalysis depends on Asp280, which acts as the Proton donor. Ser351 is modified (phosphoserine).

Belongs to the eIF-2B alpha/beta/delta subunits family. MtnA subfamily. In terms of assembly, homodimer.

Its subcellular location is the cytoplasm. The protein localises to the nucleus. The enzyme catalyses 5-(methylsulfanyl)-alpha-D-ribose 1-phosphate = 5-(methylsulfanyl)-D-ribulose 1-phosphate. It participates in amino-acid biosynthesis; L-methionine biosynthesis via salvage pathway; L-methionine from S-methyl-5-thio-alpha-D-ribose 1-phosphate: step 1/6. Catalyzes the interconversion of methylthioribose-1-phosphate (MTR-1-P) into methylthioribulose-1-phosphate (MTRu-1-P). In Saccharomyces cerevisiae (strain RM11-1a) (Baker's yeast), this protein is Methylthioribose-1-phosphate isomerase.